We begin with the raw amino-acid sequence, 319 residues long: Acetyl esterase (319 aa).

The Involved in the stabilization of the negatively charged intermediate by the formation of the oxyanion hole signature appears at 91 to 93; sequence HGG. Catalysis depends on residues serine 165, aspartate 262, and histidine 292.

It belongs to the 'GDXG' lipolytic enzyme family. Homodimer. Interacts with MalT and MelA.

It is found in the cytoplasm. Functionally, displays esterase activity towards short chain fatty esters (acyl chain length of up to 8 carbons). Able to hydrolyze triacetylglycerol (triacetin) and tributyrylglycerol (tributyrin), but not trioleylglycerol (triolein) or cholesterol oleate. Negatively regulates MalT activity by antagonizing maltotriose binding. Inhibits MelA galactosidase activity. This is Acetyl esterase from Escherichia coli O81 (strain ED1a).